The primary structure comprises 462 residues: Adenylosuccinate lyase (462 aa).

N(6)-(1,2-dicarboxyethyl)-AMP-binding positions include 21 to 22 (RY), 87 to 89 (KHD), and 114 to 115 (TS). Residue His-162 is the Proton donor/acceptor of the active site. A N(6)-(1,2-dicarboxyethyl)-AMP-binding site is contributed by Gln-236. The active-site Proton donor/acceptor is Ser-287. Residues Ser-288, 293–295 (KRN), and 332–336 (SAERC) contribute to the N(6)-(1,2-dicarboxyethyl)-AMP site.

The protein belongs to the lyase 1 family. Adenylosuccinate lyase subfamily. In terms of assembly, homotetramer. Residues from neighboring subunits contribute catalytic and substrate-binding residues to each active site.

It carries out the reaction N(6)-(1,2-dicarboxyethyl)-AMP = fumarate + AMP. The enzyme catalyses (2S)-2-[5-amino-1-(5-phospho-beta-D-ribosyl)imidazole-4-carboxamido]succinate = 5-amino-1-(5-phospho-beta-D-ribosyl)imidazole-4-carboxamide + fumarate. It participates in purine metabolism; AMP biosynthesis via de novo pathway; AMP from IMP: step 2/2. It functions in the pathway purine metabolism; IMP biosynthesis via de novo pathway; 5-amino-1-(5-phospho-D-ribosyl)imidazole-4-carboxamide from 5-amino-1-(5-phospho-D-ribosyl)imidazole-4-carboxylate: step 2/2. In terms of biological role, catalyzes two reactions in de novo purine nucleotide biosynthesis. Catalyzes the breakdown of 5-aminoimidazole- (N-succinylocarboxamide) ribotide (SAICAR or 2-[5-amino-1-(5-phospho-beta-D-ribosyl)imidazole-4-carboxamido]succinate) to 5-aminoimidazole-4-carboxamide ribotide (AICAR or 5-amino-1-(5-phospho-beta-D-ribosyl)imidazole-4-carboxamide) and fumarate, and of adenylosuccinate (ADS or N(6)-(1,2-dicarboxyethyl)-AMP) to adenosine monophosphate (AMP) and fumarate. This Methanocaldococcus jannaschii (strain ATCC 43067 / DSM 2661 / JAL-1 / JCM 10045 / NBRC 100440) (Methanococcus jannaschii) protein is Adenylosuccinate lyase (purB).